A 501-amino-acid chain; its full sequence is E3 ubiquitin-protein ligase TRIM35 (501 aa).

Met-1 is subject to N-acetylmethionine. Ser-8 bears the Phosphoserine mark. Residues 21–61 form an RING-type zinc finger; that stretch reads CAVCYDPFRDAVTLRCGHNFCRRCVSGCWEVQTTPSCPVCK. A B box-type zinc finger spans residues 96–137; that stretch reads RSPRPCRAHRAPLTLFCVEDKELLCCACQADARHQEHRVQPI. The Zn(2+) site is built by Cys-101, His-104, Cys-123, and His-129. A coiled-coil region spans residues 209–252; sequence MKEESRKKHLLAEEKMKQLAEQTEALAREIERLQMEMKEDDMTF. The B30.2/SPRY domain maps to 284–495; it reads LESLQYRVWK…LRICHLRVSI (212 aa).

In terms of assembly, interacts with PKM isoform M2, but not isoform M1; this interaction may compete with that between PKM and FGFR1, and hence reduces FGFR1-dependent tyrosine phosphorylation of PKM. Interacts with IRF7; this interaction promotes IRF7 proteasomal degradation. Interacts with TRAF3; this interaction promotes TRAF3 activation.

The protein resides in the cytoplasm. It is found in the nucleus. It carries out the reaction S-ubiquitinyl-[E2 ubiquitin-conjugating enzyme]-L-cysteine + [acceptor protein]-L-lysine = [E2 ubiquitin-conjugating enzyme]-L-cysteine + N(6)-ubiquitinyl-[acceptor protein]-L-lysine.. The protein operates within protein modification; protein ubiquitination. E3 ubiquitin-protein ligase that participates in multiple biological processes including cell death, glucose metabolism, and in particular, the innate immune response. Mediates 'Lys-63'-linked polyubiquitination of TRAF3 thereby promoting type I interferon production via RIG-I signaling pathway. Can also catalyze 'Lys-48'-linked polyubiquitination and proteasomal degradation of viral proteins such as influenza virus PB2. Acts as a negative feedback regulator of TLR7- and TLR9-triggered signaling. Mechanistically, promotes the 'Lys-48'-linked ubiquitination of IRF7 and induces its degradation via a proteasome-dependent pathway. Reduces FGFR1-dependent tyrosine phosphorylation of PKM, inhibiting PKM-dependent lactate production, glucose metabolism, and cell growth. The protein is E3 ubiquitin-protein ligase TRIM35 (Trim35) of Rattus norvegicus (Rat).